We begin with the raw amino-acid sequence, 29 residues long: Trypsin inhibitor 1 (29 aa).

Disulfide bonds link Cys-3-Cys-20, Cys-10-Cys-22, and Cys-16-Cys-28.

It belongs to the protease inhibitor I7 (squash-type serine protease inhibitor) family.

The protein localises to the secreted. Inhibits trypsin. The sequence is that of Trypsin inhibitor 1 from Cucurbita maxima (Pumpkin).